A 613-amino-acid polypeptide reads, in one-letter code: MSKIIGIDLGTSNSAAAVVISGKPTVIPAAEGVSLGGKAFPSYVAFTKDGQLLVGEPARRQALLNPEGTVYAAKRKMGTDYKYKIFGKEYTPQQISAFILQKIKRDAEAFLGEPVTDAVITVPAYFNDNQRQATKDAGAIAGLNVRRIINEPTAACLAYGIDKLNQTLKIVIYDLGGGTLDVTIMDFGQGVFQVLSTSGDTHLGGTDMDEAIVNFLADNFQRENGIDLRKDHSAYIRLRDAAEKAKIELSTVLETEINLPYITATQDGPKHLQYTLTRAKFEELIAPIVDRSKVPLDTALEGAKLKKGDIDKIILIGGPTRIPYVRKYVEDYFGRKAEGGVDPMEAVAMGAAIQGAVLAGEVKDIVLLDVTPLTLGIETLGGVMTPLIPANTTIPTKKSQIFTTAADMQTTVTIHVVQGERPLAKDDVSLGMFNLDGIPPAPRGVPQIEVTFDIDANGILNVSAKDLGTGKQQSISITATNKLSKDEIERMKKEAEQYAEQDKKAKEEIETINNAETLAYTAEKTINDAGDKIDESSKESVRSIVKDLRDAISSKDINKIKELSEKLTKEIQEIGTKMYQSQATQGTSQNSSQNNNSQNNNGDTVDADFKESK.

Residues 578 to 613 are disordered; that stretch reads MYQSQATQGTSQNSSQNNNSQNNNGDTVDADFKESK. Residues 580-602 show a composition bias toward low complexity; that stretch reads QSQATQGTSQNSSQNNNSQNNNG.

It belongs to the heat shock protein 70 family.

Functionally, acts as a chaperone. The protein is Chaperone protein DnaK of Picrophilus torridus (strain ATCC 700027 / DSM 9790 / JCM 10055 / NBRC 100828 / KAW 2/3).